Consider the following 316-residue polypeptide: tRNA-cytidine(32) 2-sulfurtransferase (316 aa).

Residues 52 to 57 (SGGKDS) carry the PP-loop motif motif. Residues C127, C130, and C218 each contribute to the [4Fe-4S] cluster site.

It belongs to the TtcA family. As to quaternary structure, homodimer. It depends on Mg(2+) as a cofactor. Requires [4Fe-4S] cluster as cofactor.

It is found in the cytoplasm. The catalysed reaction is cytidine(32) in tRNA + S-sulfanyl-L-cysteinyl-[cysteine desulfurase] + AH2 + ATP = 2-thiocytidine(32) in tRNA + L-cysteinyl-[cysteine desulfurase] + A + AMP + diphosphate + H(+). It functions in the pathway tRNA modification. Catalyzes the ATP-dependent 2-thiolation of cytidine in position 32 of tRNA, to form 2-thiocytidine (s(2)C32). The sulfur atoms are provided by the cysteine/cysteine desulfurase (IscS) system. In Haemophilus ducreyi (strain 35000HP / ATCC 700724), this protein is tRNA-cytidine(32) 2-sulfurtransferase.